We begin with the raw amino-acid sequence, 1001 residues long: Ankyrin repeat domain-containing protein 35 (1001 aa).

6 ANK repeats span residues 53–82 (NGQS…DINS), 86–115 (DGST…NEDA), 119–148 (ENRS…FLDV), 152–181 (DGRT…RVNV), 185–214 (NDKS…DAGA), and 218–247 (TGHD…RRRR). Disordered regions lie at residues 256–296 (PDLA…PCSE), 352–482 (PRAS…VAEP), and 559–601 (PEVP…ALGG). Acidic residues predominate over residues 281–295 (PEEEQEEKEDEDPCS). The stretch at 295–344 (SEEWRWKYEEERRKVVRLEQELVQKTEECKTQAAAYLDLENQIREQAQEL) forms a coiled coil. The segment covering 402–422 (KKAEDSAPGKIQYEVHGRSQP) has biased composition (basic and acidic residues). Over residues 423–434 (EEQGPPQSPASE) the composition is skewed to low complexity. The segment covering 440–450 (TGQQLTTNGAQ) has biased composition (polar residues). Residues 579–588 (KQDEEKEKRV) are compositionally biased toward basic and acidic residues. Coiled-coil stretches lie at residues 610-696 (KGQL…LLAS), 733-810 (ISTL…IGKL), and 851-968 (QELK…HEEI). The disordered stretch occupies residues 879–902 (RRSGDLAAQAAEQERQASEMRGRS). Residues 890-902 (EQERQASEMRGRS) are compositionally biased toward basic and acidic residues.

The polypeptide is Ankyrin repeat domain-containing protein 35 (ANKRD35) (Homo sapiens (Human)).